Consider the following 428-residue polypeptide: AP2-like ethylene-responsive transcription factor At2g41710 (428 aa).

The span at 1–10 shows a compositional bias: polar residues; that stretch reads MASVSSSDQG. A disordered region spans residues 1–28; sequence MASVSSSDQGPKTEAGCSGGGGGESSET. Positions 70 to 136 form a DNA-binding region, AP2/ERF; that stretch reads IYRGVTRHRW…WGPGTLINFP (67 aa).

It belongs to the AP2/ERF transcription factor family. AP2 subfamily.

The protein resides in the nucleus. In terms of biological role, probably acts as a transcriptional activator. Binds to the GCC-box pathogenesis-related promoter element. May be involved in the regulation of gene expression by stress factors and by components of stress signal transduction pathways. The protein is AP2-like ethylene-responsive transcription factor At2g41710 of Arabidopsis thaliana (Mouse-ear cress).